The chain runs to 355 residues: DNA-directed RNA polymerase subunit alpha (355 aa).

The alpha N-terminal domain (alpha-NTD) stretch occupies residues 1 to 248 (MYYNNDVSLC…EQLQPFISSD (248 aa)). Residues 267–355 (YDPVLLRKVD…ELAKQHTDED (89 aa)) are alpha C-terminal domain (alpha-CTD).

This sequence belongs to the RNA polymerase alpha chain family. In terms of assembly, homodimer. The RNAP catalytic core consists of 2 alpha, 1 beta, 1 beta' and 1 omega subunit. When a sigma factor is associated with the core the holoenzyme is formed, which can initiate transcription.

It catalyses the reaction RNA(n) + a ribonucleoside 5'-triphosphate = RNA(n+1) + diphosphate. Functionally, DNA-dependent RNA polymerase catalyzes the transcription of DNA into RNA using the four ribonucleoside triphosphates as substrates. In Wolbachia pipientis wMel, this protein is DNA-directed RNA polymerase subunit alpha.